A 241-amino-acid polypeptide reads, in one-letter code: Probable transcriptional regulatory protein Neut_0281 (241 aa).

The protein belongs to the TACO1 family.

The protein localises to the cytoplasm. This Nitrosomonas eutropha (strain DSM 101675 / C91 / Nm57) protein is Probable transcriptional regulatory protein Neut_0281.